Here is a 218-residue protein sequence, read N- to C-terminus: Glutathione S-transferase Mu 7 (218 aa).

The GST N-terminal domain maps to 1-88 (MPMTLGYWDI…YLGRKHNLCG (88 aa)). Residues 7-8 (YW), 46-50 (WLNEK), 59-60 (NL), and 72-73 (QS) contribute to the glutathione site. One can recognise a GST C-terminal domain in the interval 90–208 (TEEERIRVDI…KTSRFLPRPM (119 aa)). Tyr-116 contributes to the substrate binding site.

The protein belongs to the GST superfamily. Mu family. Homodimer.

Its subcellular location is the cytoplasm. It carries out the reaction RX + glutathione = an S-substituted glutathione + a halide anion + H(+). In terms of biological role, conjugation of reduced glutathione to a wide number of exogenous and endogenous hydrophobic electrophiles. This chain is Glutathione S-transferase Mu 7 (Gstm7), found in Mus musculus (Mouse).